The primary structure comprises 1380 residues: DNA-directed RNA polymerase subunit beta (1380 aa).

The protein belongs to the RNA polymerase beta chain family. As to quaternary structure, the RNAP catalytic core consists of 2 alpha, 1 beta, 1 beta' and 1 omega subunit. When a sigma factor is associated with the core the holoenzyme is formed, which can initiate transcription.

The catalysed reaction is RNA(n) + a ribonucleoside 5'-triphosphate = RNA(n+1) + diphosphate. In terms of biological role, DNA-dependent RNA polymerase catalyzes the transcription of DNA into RNA using the four ribonucleoside triphosphates as substrates. The protein is DNA-directed RNA polymerase subunit beta of Nitrobacter winogradskyi (strain ATCC 25391 / DSM 10237 / CIP 104748 / NCIMB 11846 / Nb-255).